Consider the following 663-residue polypeptide: UvrABC system protein B (663 aa).

Positions 31 to 271 constitute a Helicase ATP-binding domain; sequence DNIEGGEKAQ…EQSISKIQAE (241 aa). Position 44 to 51 (44 to 51) interacts with ATP; sequence GATGTGKT. The Beta-hairpin signature appears at 97–120; the sequence is YYDYYQPEAYVPSSDTYIEKDSSV. The region spanning 435–601 is the Helicase C-terminal domain; it reads QMDDLLGEIN…TIKKDIRDLI (167 aa). Positions 627 to 662 constitute a UVR domain; that stretch reads QEAIKQLQKNMQEAAELLDFELAAQLRDLILELKAM.

Belongs to the UvrB family. Forms a heterotetramer with UvrA during the search for lesions. Interacts with UvrC in an incision complex.

It is found in the cytoplasm. In terms of biological role, the UvrABC repair system catalyzes the recognition and processing of DNA lesions. A damage recognition complex composed of 2 UvrA and 2 UvrB subunits scans DNA for abnormalities. Upon binding of the UvrA(2)B(2) complex to a putative damaged site, the DNA wraps around one UvrB monomer. DNA wrap is dependent on ATP binding by UvrB and probably causes local melting of the DNA helix, facilitating insertion of UvrB beta-hairpin between the DNA strands. Then UvrB probes one DNA strand for the presence of a lesion. If a lesion is found the UvrA subunits dissociate and the UvrB-DNA preincision complex is formed. This complex is subsequently bound by UvrC and the second UvrB is released. If no lesion is found, the DNA wraps around the other UvrB subunit that will check the other stand for damage. The polypeptide is UvrABC system protein B (Streptococcus equi subsp. equi (strain 4047)).